The chain runs to 389 residues: MYKTKGGFQLTLQTLSLVVGFMAWSIIAPLMPFIKQDVNVTEGQISIILAIPVILGSVLRVPFGYLTNIVGAKWVFFTSFIVLLFPIFFLGQAQTPGMLMASGFFLGVGGAIFSVGVTSVPKYFPKEKVGLANGIYGMGNIGTAVSSFLAPPIAGIIGWQTTVRSYLIIIALFALIMFIFGDTQERKIKVPLMAQMKTLSKNYKLYYLSYWYFITFGAFVAFGIFLPNYLVNHFGIDKVDAGIRSGVFIALATFLRPIGGILGDKFNAVKVLMIDFVIMIIGAVILGISDHIALFTVGCLTISICAGIGNGLIFKLVPSYFSNEAGSANGIVSMMGGLGGFFPPLVITYVANLTGSSHLAFIFLAVFGCIALFTMRHLYQKEYGSLKHS.

Transmembrane regions (helical) follow at residues threonine 14–isoleucine 34, isoleucine 45–tyrosine 65, isoleucine 69–phenylalanine 89, glycine 97–valine 117, glycine 139–tryptophan 159, threonine 161–glycine 181, tryptophan 211–valine 231, glycine 246–phenylalanine 266, alanine 268–isoleucine 288, leucine 294–phenylalanine 314, isoleucine 331–alanine 351, and leucine 353–phenylalanine 373.

This sequence belongs to the major facilitator superfamily. Nitrate/nitrite porter (TC 2.A.1.8) family.

Its subcellular location is the cell membrane. Probably required for nitrate uptake under anoxic conditions. Also possibly involved in excretion of nitrite produced by the dissimilatory reduction of nitrate. The protein is Probable nitrate transporter NarT (narT) of Staphylococcus aureus (strain MRSA252).